The sequence spans 109 residues: Ferredoxin (109 aa).

4Fe-4S ferredoxin-type domains lie at threonine 2 to glutamate 30 and phenylalanine 31 to proline 60. [3Fe-4S] cluster contacts are provided by cysteine 9 and cysteine 17. Residues cysteine 21, cysteine 40, cysteine 43, and cysteine 46 each coordinate [4Fe-4S] cluster. A [3Fe-4S] cluster-binding site is contributed by cysteine 50.

[4Fe-4S] cluster is required as a cofactor. [3Fe-4S] cluster serves as cofactor.

Its function is as follows. Ferredoxins are iron-sulfur proteins that transfer electrons in a wide variety of metabolic reactions. The polypeptide is Ferredoxin (fdxA) (Rickettsia prowazekii (strain Madrid E)).